We begin with the raw amino-acid sequence, 299 residues long: Homoserine kinase (299 aa).

Residue 88-98 coordinates ATP; sequence PLGRGLGSSAT.

It belongs to the GHMP kinase family. Homoserine kinase subfamily.

It is found in the cytoplasm. It catalyses the reaction L-homoserine + ATP = O-phospho-L-homoserine + ADP + H(+). It participates in amino-acid biosynthesis; L-threonine biosynthesis; L-threonine from L-aspartate: step 4/5. Its function is as follows. Catalyzes the ATP-dependent phosphorylation of L-homoserine to L-homoserine phosphate. The sequence is that of Homoserine kinase from Gloeobacter violaceus (strain ATCC 29082 / PCC 7421).